We begin with the raw amino-acid sequence, 757 residues long: Polyribonucleotide nucleotidyltransferase (757 aa).

D525 and D531 together coordinate Mg(2+). Residues 591-650 enclose the KH domain; the sequence is PRVISVNIPVDKIGELIGPKGKTINAIQDETGADISIEEDGAVYIGAVDGPSAEAARAQV. The 73-residue stretch at 662–734 folds into the S1 motif domain; the sequence is GESFLGTVVK…DRGKLSLAPV (73 aa). The tract at residues 736–757 is disordered; it reads EEAADQEGSAAASDGPEAPAEG.

Belongs to the polyribonucleotide nucleotidyltransferase family. It depends on Mg(2+) as a cofactor.

It localises to the cytoplasm. It carries out the reaction RNA(n+1) + phosphate = RNA(n) + a ribonucleoside 5'-diphosphate. Its function is as follows. Involved in mRNA degradation. Catalyzes the phosphorolysis of single-stranded polyribonucleotides processively in the 3'- to 5'-direction. The chain is Polyribonucleotide nucleotidyltransferase from Clavibacter sepedonicus (Clavibacter michiganensis subsp. sepedonicus).